The sequence spans 469 residues: MTAPRTLYDKIFDDHLVDRQDDGTCLLYIDRHLVHEVTSPQAFEGLRMAGRAVRHPEKTLAVVDHNVPTSPDRKFGIKNEESRIQVEALAKNAVDFGIEYYNEADRRQGIVHIVGPEQGFTLPGMTIVCGDSHTSTHGAFGALAHGIGTSEVEHVLATQTLIQRKAKNMLVQVDGKLPDGVTAKDIILAIIGEIGTAGGTGHVIEYAGEAIRSLSMEGRMTVCNMSIEGGARAGMIAPDETTYAYIKDRPRAPKGAAWEMARAYWETLHTDEGAHFDRVVKLDAANLPPIVTWGSSPEDVVSVTGYVPNADEIQDETKRLSKKRALEYMGLTAGTKITDIALDRVFIGSCTNGRIEDLRAAAKIAEGRKVHPRINAMIVPGSGLVKAQAEAEGLDKIFIEAGFDWREPGCSMCLAMNDDRLKPGERCASTSNRNFEGRQGFKGRTHLVSPAMAAAAAIAGHFVDIREWK.

Positions 350, 410, and 413 each coordinate [4Fe-4S] cluster.

This sequence belongs to the aconitase/IPM isomerase family. LeuC type 1 subfamily. As to quaternary structure, heterodimer of LeuC and LeuD. It depends on [4Fe-4S] cluster as a cofactor.

It catalyses the reaction (2R,3S)-3-isopropylmalate = (2S)-2-isopropylmalate. The protein operates within amino-acid biosynthesis; L-leucine biosynthesis; L-leucine from 3-methyl-2-oxobutanoate: step 2/4. Its function is as follows. Catalyzes the isomerization between 2-isopropylmalate and 3-isopropylmalate, via the formation of 2-isopropylmaleate. The sequence is that of 3-isopropylmalate dehydratase large subunit from Chelativorans sp. (strain BNC1).